The sequence spans 274 residues: 3-methyl-2-oxobutanoate hydroxymethyltransferase (274 aa).

Residues Asp-49 and Asp-88 each contribute to the Mg(2+) site. 3-methyl-2-oxobutanoate contacts are provided by residues 49–50 (DS), Asp-88, and Lys-118. Glu-120 serves as a coordination point for Mg(2+). The Proton acceptor role is filled by Glu-187.

It belongs to the PanB family. As to quaternary structure, homodecamer; pentamer of dimers. It depends on Mg(2+) as a cofactor.

It localises to the cytoplasm. The enzyme catalyses 3-methyl-2-oxobutanoate + (6R)-5,10-methylene-5,6,7,8-tetrahydrofolate + H2O = 2-dehydropantoate + (6S)-5,6,7,8-tetrahydrofolate. It functions in the pathway cofactor biosynthesis; (R)-pantothenate biosynthesis; (R)-pantoate from 3-methyl-2-oxobutanoate: step 1/2. Its function is as follows. Catalyzes the reversible reaction in which hydroxymethyl group from 5,10-methylenetetrahydrofolate is transferred onto alpha-ketoisovalerate to form ketopantoate. In Paramagnetospirillum magneticum (strain ATCC 700264 / AMB-1) (Magnetospirillum magneticum), this protein is 3-methyl-2-oxobutanoate hydroxymethyltransferase.